The primary structure comprises 473 residues: Reticulon-4 receptor (473 aa).

An N-terminal signal peptide occupies residues 1-26; the sequence is MKRASAGGSRLLAWVLWLQAWQVAAP. Intrachain disulfides connect C27/C33 and C31/C43. Residues 27–54 enclose the LRRNT domain; sequence CPGACVCYNEPKVTTSCPQQGLQAVPVG. LRR repeat units lie at residues 55 to 79, 81 to 103, 104 to 128, 129 to 152, 153 to 176, 178 to 200, 202 to 224, 225 to 248, and 250 to 273; these read IPAASQRIFLHGNRISHVPAASFRA, RNLTILWLHSNVLARIDAAAFTG, LALLEQLDLSDNAQLRSVDPATFHG, LGRLHTLHLDRCGLQELGPGLFRG, LAALQYLYLQDNALQALPDDTFRD, GNLTHLFLHGNRISSVPERAFRG, HSLDRLLLHQNRVAHVHPHAFRD, LGRLMTLYLFANNLSALPTEALAP, and RALQYLRLNDNPWVCDCRARPLWA. N82 carries an N-linked (GlcNAc...) asparagine glycan. Residue N179 is glycosylated (N-linked (GlcNAc...) asparagine). One can recognise an LRRCT domain in the interval 260 to 310; sequence NPWVCDCRARPLWAWLQKFRGSSSEVPCSLPQRLAGRDLKRLAANDLQGCA. 3 disulfide bridges follow: C264/C287, C266/C335, and C309/C336. Positions 346-447 are disordered; that stretch reads VLEPGRPASA…GGGTGDSEGS (102 aa). The segment covering 413–429 has biased composition (basic residues); sequence PRRRPGCSRKNRTRSHC. A compositionally biased stretch (gly residues) spans 434-445; sequence AGSGGGGTGDSE. Residue S447 is the site of GPI-anchor amidated serine attachment. Positions 448–473 are cleaved as a propeptide — removed in mature form; the sequence is GALPSLTCSLTPLGLALVLWTVLGPC.

This sequence belongs to the Nogo receptor family. Homodimer. Interacts with MAG. Interacts with RTN4. Interacts with NGFR. Interacts with LINGO1. Interacts with KIAA0319L. Interacts with OLFM1; this inhibits interaction with LINGO1 and NGFR. Interacts with OMG. Post-translationally, N-glycosylated. O-glycosylated. Contains terminal sialic acid groups on its glycan chains. Widespread in the brain but highest levels in the gray matter. Low levels in heart and kidney; not expressed in oligodendrocytes (white matter).

The protein resides in the cell membrane. Its subcellular location is the membrane raft. The protein localises to the cell projection. It is found in the dendrite. It localises to the axon. The protein resides in the perikaryon. Its function is as follows. Receptor for RTN4, OMG and MAG. Functions as a receptor for the sialylated gangliosides GT1b and GM1. Besides, functions as a receptor for chondroitin sulfate proteoglycans. Can also bind heparin. Intracellular signaling cascades are triggered via the coreceptor NGFR. Signaling mediates activation of Rho and downstream reorganization of the actin cytoskeleton. Mediates axonal growth inhibition. Plays a role in regulating axon regeneration and neuronal plasticity in the adult central nervous system. Plays a role in postnatal brain development. Required for normal axon migration across the brain midline and normal formation of the corpus callosum. Protects motoneurons against apoptosis; protection against apoptosis is probably mediated via interaction with MAG. Acts in conjunction with RTN4 and LINGO1 in regulating neuronal precursor cell motility during cortical development. Like other family members, plays a role in restricting the number dendritic spines and the number of synapses that are formed during brain development. This Homo sapiens (Human) protein is Reticulon-4 receptor (RTN4R).